Here is a 70-residue protein sequence, read N- to C-terminus: Protein SlyX homolog (70 aa).

The protein belongs to the SlyX family.

This is Protein SlyX homolog from Shewanella sp. (strain MR-4).